Consider the following 520-residue polypeptide: MKMTSIQQRAELHRQIWQIANDVRGSVDGWDFKQYVLGALFYRFISENFSSYIEAGDDSICYAKLDDSVITDDIKDDAIKTKGYFIYPSQLFCNVAAKANTNDRLNADLNSIFVAIESSAYGYPSEADIKGLFADFDTTSNRLGNTVKDKNARLAAVLKGVEGLKLGDFNEHQIDLFGDAYEFLISNYAANAGKSGGEFFTPQHVSKLIAQLAMHGQTHVNKIYDPAAGSGSLLLQAKKQFDDHIIEEGFFGQEINHTTYNLARMNMFLHNINYDKFDIKLGNTLTEPHFRDEKPFDAIVSNPPYSVKWIGSDDPTLINDERFAPAGVLAPKSKADFAFVLHALNYLSAKGRAAIVCFPGIFYRGGAEQKIRQYLVDNNYVETVISLAPNLFFGTTIAVNILVLSKHKTDTKVQFIDASELFKKETNNNILTDAHIEQIMQVFASKEDVAHLAKSVAFETVVANDYNLSVSSYVEAKDTREIIDIAELNAELKTTVSKIDQLRKDIDAIVAEIEGCEVQK.

Residues 198 to 203 (EFFTPQ), 230 to 232 (SGS), and E254 contribute to the S-adenosyl-L-methionine site.

Belongs to the N(4)/N(6)-methyltransferase family. As to quaternary structure, the type I restriction/modification system is composed of three polypeptides R, M and S; the restriction enzyme has stoichiometry R(2)M(2)S(1) while the methyltransferase is M(2)S(1).

It catalyses the reaction a 2'-deoxyadenosine in DNA + S-adenosyl-L-methionine = an N(6)-methyl-2'-deoxyadenosine in DNA + S-adenosyl-L-homocysteine + H(+). Functionally, the subtype gamma methyltransferase (M) subunit of a type I restriction enzyme. The M and S subunits together form a methyltransferase (MTase) that methylates two adenine residues of the sequence 5'-CCAN(7)ATGC-3'. In the presence of the R subunit the complex can also act as an endonuclease, binding to the same target sequence but cutting the DNA some distance from this site. Whether the DNA is cut or modified depends on the methylation state of the target sequence. When the target site is unmodified, the DNA is cut. When the target site is hemimethylated, the complex acts as a maintenance MTase modifying the DNA so that both strands become methylated. After locating a non-methylated recognition site, the enzyme complex serves as a molecular motor that translocates DNA in an ATP-dependent manner until a collision occurs that triggers cleavage. In Escherichia coli, this protein is Type I restriction enzyme EcoprrI methylase subunit.